The primary structure comprises 127 residues: Large ribosomal subunit protein bL17 (127 aa).

Belongs to the bacterial ribosomal protein bL17 family. In terms of assembly, part of the 50S ribosomal subunit. Contacts protein L32.

The protein is Large ribosomal subunit protein bL17 of Mannheimia succiniciproducens (strain KCTC 0769BP / MBEL55E).